A 227-amino-acid chain; its full sequence is N-(5'-phosphoribosyl)anthranilate isomerase (227 aa).

The protein belongs to the TrpF family.

It catalyses the reaction N-(5-phospho-beta-D-ribosyl)anthranilate = 1-(2-carboxyphenylamino)-1-deoxy-D-ribulose 5-phosphate. It functions in the pathway amino-acid biosynthesis; L-tryptophan biosynthesis; L-tryptophan from chorismate: step 3/5. In Herminiimonas arsenicoxydans, this protein is N-(5'-phosphoribosyl)anthranilate isomerase.